The primary structure comprises 230 residues: DNA mismatch repair protein MutH (230 aa).

The protein belongs to the MutH family.

It localises to the cytoplasm. Sequence-specific endonuclease that cleaves unmethylated GATC sequences. It is involved in DNA mismatch repair. In Enterobacter sp. (strain 638), this protein is DNA mismatch repair protein MutH.